Consider the following 590-residue polypeptide: UvrABC system protein C (590 aa).

In terms of domain architecture, GIY-YIG spans 15 to 92 (DLPGCYMMKD…IQKHKPYYNI (78 aa)). One can recognise a UVR domain in the interval 197–232 (SKIKKELEQKMETASENLEFERAAEIRDQIHYVEMT).

The protein belongs to the UvrC family. In terms of assembly, interacts with UvrB in an incision complex.

The protein localises to the cytoplasm. In terms of biological role, the UvrABC repair system catalyzes the recognition and processing of DNA lesions. UvrC both incises the 5' and 3' sides of the lesion. The N-terminal half is responsible for the 3' incision and the C-terminal half is responsible for the 5' incision. The polypeptide is UvrABC system protein C (Ligilactobacillus salivarius (strain UCC118) (Lactobacillus salivarius)).